The sequence spans 147 residues: Hemoglobin subunit delta (147 aa).

In terms of domain architecture, Globin spans 3-147; that stretch reads HLTPEEKTAV…VANALAHKYH (145 aa). Ser-51 carries the phosphoserine modification. The heme b site is built by His-64 and His-93.

This sequence belongs to the globin family. Heterotetramer of two delta chains and two alpha chains. As to expression, red blood cells.

In Gorilla gorilla gorilla (Western lowland gorilla), this protein is Hemoglobin subunit delta (HBD).